Reading from the N-terminus, the 541-residue chain is MSQLVECVPNFSEGKNQEVIDAISRAVAQTPGCVLLDVDSGPSTNRTVYTFVGRPEDVVEGALNAARAAYQLIDMSRHHGEHPRMGALDVCPFIPVRGVTMDECVRCAQAFGQRLAEELGVPVYLYGEAARTAGRQSLPALRAGEYEALPEKLKQAEWAPDFGPSAFVPSWGATVAGARKFLLAFNINLLSTREQAHRIALDLREQGRGKDQPGRLKKVQAIGWYLDEKNLAQVSTNLLDFEVTGLHTVFEETCREAQELSLPVVGSQLVGLVPLKALLDAAAFYCEKENLFLLQDEHRIRLVVNRLGLDSLAPFKPKERIIEYLVPEAGPEQSLLHKPLRTFVREVGSRSAAPGAGSVAAATAAMGAALASMVGLMTYGRRQFEHLDATMRRLIPPFHAASAKLTSLVDADARAFEAYLKAMKLPKDTPEDKDRRAAALQEGLRQAVAVPLALAETVASLWPALQELALCGNLACRSDLQVAAKALETGVFGAYFNVLINLKDVTDDAFKAQVRQRISSLLQEAKTQAALVLDRLEARQA.

The interval Met-1–Phe-181 is formiminotransferase N-subdomain. His-82 acts as the For formimidoyltransferase activity in catalysis. Gly-163–Gly-172 provides a ligand contact to folate. Residues Leu-182 to Val-326 form a formiminotransferase C-subdomain region. The linker stretch occupies residues Pro-327–Ser-334. A cyclodeaminase/cyclohydrolase region spans residues Leu-335 to Ala-541. Residue Asp-412 is the For cyclodeaminase activity of the active site. Phosphoserine is present on Ser-520.

This sequence in the C-terminal section; belongs to the cyclodeaminase/cyclohydrolase family. It in the N-terminal section; belongs to the formiminotransferase family. Homooctamer, including four polyglutamate binding sites. The subunits are arranged as a tetramer of dimers, and form a planar ring-shaped structure.

It localises to the cytoplasm. The protein localises to the cytosol. It is found in the golgi apparatus. Its subcellular location is the cytoskeleton. The protein resides in the microtubule organizing center. It localises to the centrosome. The protein localises to the centriole. The enzyme catalyses 5-formimidoyltetrahydrofolate + L-glutamate = N-formimidoyl-L-glutamate + (6S)-5,6,7,8-tetrahydrofolate. The catalysed reaction is 5-formimidoyltetrahydrofolate + 2 H(+) = (6R)-5,10-methenyltetrahydrofolate + NH4(+). Its pathway is amino-acid degradation; L-histidine degradation into L-glutamate; L-glutamate from N-formimidoyl-L-glutamate (transferase route): step 1/1. Folate-dependent enzyme, that displays both transferase and deaminase activity. Serves to channel one-carbon units from formiminoglutamate to the folate pool. In terms of biological role, binds and promotes bundling of vimentin filaments originating from the Golgi. In Sus scrofa (Pig), this protein is Formimidoyltransferase-cyclodeaminase (FTCD).